Reading from the N-terminus, the 671-residue chain is tRNA(Met) cytidine acetyltransferase TmcA (671 aa).

Residues Gln180, 202–211 (GRGKSALAGQ), and Arg319 each bind ATP. The 176-residue stretch at 356-531 (QTLWRSEPET…SGCYTAMALL (176 aa)) folds into the N-acetyltransferase domain. Acetyl-CoA contacts are provided by residues 461–463 (IAV), 468–474 (QREGTGR), Glu499, and Arg506.

It belongs to the RNA cytidine acetyltransferase family. TmcA subfamily.

The protein localises to the cytoplasm. It catalyses the reaction cytidine(34) in elongator tRNA(Met) + acetyl-CoA + ATP + H2O = N(4)-acetylcytidine(34) in elongator tRNA(Met) + ADP + phosphate + CoA + H(+). In terms of biological role, catalyzes the formation of N(4)-acetylcytidine (ac(4)C) at the wobble position of tRNA(Met), by using acetyl-CoA as an acetyl donor and ATP (or GTP). The chain is tRNA(Met) cytidine acetyltransferase TmcA from Shigella flexneri serotype 5b (strain 8401).